A 136-amino-acid chain; its full sequence is Holo-[acyl-carrier-protein] synthase (136 aa).

The Mg(2+) site is built by Asp7 and Glu53.

This sequence belongs to the P-Pant transferase superfamily. AcpS family. Requires Mg(2+) as cofactor.

It is found in the cytoplasm. The enzyme catalyses apo-[ACP] + CoA = holo-[ACP] + adenosine 3',5'-bisphosphate + H(+). Functionally, transfers the 4'-phosphopantetheine moiety from coenzyme A to a Ser of acyl-carrier-protein. The sequence is that of Holo-[acyl-carrier-protein] synthase from Roseiflexus castenholzii (strain DSM 13941 / HLO8).